Consider the following 501-residue polypeptide: Splicing factor ESS-2 homolog (501 aa).

Low complexity-rich tracts occupy residues 1-18 (MSATTRTPATPGTPGTPG) and 105-115 (ISGTGRSTSRR). Disordered stretches follow at residues 1–20 (MSATTRTPATPGTPGTPGSL) and 105–163 (ISGT…GRDT). Polar residues predominate over residues 126–151 (TPVSQAKCSNTPLPNSRATDTPFSTD). Basic and acidic residues predominate over residues 152–163 (GSEKSDAEGRDT). 2 positions are modified to phosphoserine: S409 and S411. The interval 425-471 (RGTPRLRHTPSPMSGRKRKVTPGVVRSTNTPILGEPKPKQQAKISTP) is disordered.

This sequence belongs to the ESS2 family.

The protein resides in the nucleus. The chain is Splicing factor ESS-2 homolog (Es2) from Drosophila melanogaster (Fruit fly).